A 456-amino-acid polypeptide reads, in one-letter code: UDP-glycosyltransferase 74D1 (456 aa).

UDP-alpha-D-glucose contacts are provided by residues Ser279, 332-334 (SPQ), 349-357 (HCGWNSTLE), and 371-374 (YSDQ).

Belongs to the UDP-glycosyltransferase family. In terms of tissue distribution, expressed in leaves.

Its function is as follows. Glucosyltransferase that glucosylates jasmonate (JA) and JA derivatives. Also active on indole-3-acetic acid (IAA), 4-coumrate, cinnamate and caffeate. The chain is UDP-glycosyltransferase 74D1 (UGT74D1) from Arabidopsis thaliana (Mouse-ear cress).